The primary structure comprises 1000 residues: Ribosome assembly protein 1 (1000 aa).

The tr-type G domain occupies 17–246 (ENIRNFTLLA…YEKKLGLKQK (230 aa)). Residues 26–33 (AHVDHGKT), 100–104 (DSPGH), and 154–157 (NKMD) contribute to the GTP site.

Belongs to the TRAFAC class translation factor GTPase superfamily. Classic translation factor GTPase family.

The protein resides in the cytoplasm. It carries out the reaction GTP + H2O = GDP + phosphate + H(+). Its activity is regulated as follows. GTPase activity is stimulated in the presence of 60S subunits. In terms of biological role, GTPase involved in the biogenesis of the 60S ribosomal subunit and translational activation of ribosomes. Together with sdo1, may trigger the GTP-dependent release of tif6 from 60S pre-ribosomes in the cytoplasm, thereby activating ribosomes for translation competence by allowing 80S ribosome assembly and facilitating tif6 recycling to the nucleus, where it is required for 60S rRNA processing and nuclear export. Inhibits GTPase activity of ribosome-bound EF-2. This chain is Ribosome assembly protein 1 (ria1), found in Schizosaccharomyces pombe (strain 972 / ATCC 24843) (Fission yeast).